The sequence spans 342 residues: Prenyl transferase penC (342 aa).

The helical transmembrane segment at 17–37 (LSYLTLTVGALALVVVLYISI) threads the bilayer. Isopentenyl diphosphate is bound at residue histidine 110. Mg(2+) is bound by residues aspartate 117 and aspartate 121. Residue arginine 126 coordinates dimethylallyl diphosphate. The N-linked (GlcNAc...) asparagine glycan is linked to asparagine 154. Lysine 210 serves as a coordination point for dimethylallyl diphosphate.

The protein belongs to the FPP/GGPP synthase family.

It localises to the membrane. The protein operates within secondary metabolite biosynthesis. Functionally, prenyl transferase; part of the gene cluster that mediates the biosynthesis of the indole diterpenes penitrems. The geranylgeranyl diphosphate (GGPP) synthase penG catalyzes the first step in penitrem biosynthesis via conversion of farnesyl pyrophosphate and isopentyl pyrophosphate into geranylgeranyl pyrophosphate (GGPP). Condensation of indole-3-glycerol phosphate with GGPP by the prenyl transferase penC then forms 3-geranylgeranylindole (3-GGI). Epoxidation by the FAD-dependent monooxygenase penM leads to a epoxidized-GGI that is substrate of the terpene cyclase penB for cyclization to yield paspaline. Paspaline is subsequently converted to 13-desoxypaxilline by the cytochrome P450 monooxygenase penP, the latter being then converted to paxilline by the cytochrome P450 monooxygenase penQ. Paxilline is converted to beta-paxitriol via C-10 ketoreduction by the short-chain dehydrogenase PC-15 which can be monoprenylated at the C-20 by the indole diterpene prenyltransferase penD. A two-step elimination (acetylation and elimination) process performed by the O-acetyltransferase PC-16 and the P.simplicissimum ptmI-ortholog not yet identified in P.crustosum, leads to the production of the prenylated form of penijanthine. The FAD-linked oxidoreductase ptmO then converts the prenylated form of penijanthine into PC-M5 which is in turn transformed into PC-M4 by the aromatic dimethylallyltransferase PC-22. A series of oxidation steps involving 4 cytochrome P450 monooxygenases (PC-21, PC-05, PC-23, PC-20) and a FAD-dependent monooxygenase (PC-14) are required for the transformation of PC-M4 to penitrems A and E. Synthesis of these final products is proposed to proceed via penitrems D and C (PC-21, PC-05, PC-14) and penitrems B and F (PC-21, PC-05, PC-14, PC-23). This Penicillium crustosum (Blue mold fungus) protein is Prenyl transferase penC.